Here is a 536-residue protein sequence, read N- to C-terminus: Apolipoprotein N-acyltransferase (536 aa).

6 consecutive transmembrane segments (helical) span residues 34–54 (PLWW…RPGA), 64–84 (ALIG…WLFI), 89–109 (YGAL…AFLA), 129–149 (GAAL…GSLW), 172–192 (YVGV…CVQW), and 199–219 (HWPM…AAVQ). The 244-residue stretch at 244–487 (LQGNIAQDEK…RGVLRGQVHG (244 aa)) folds into the CN hydrolase domain. Glu283 acts as the Proton acceptor in catalysis. Lys345 is a catalytic residue. Catalysis depends on Cys395, which acts as the Nucleophile. Residues 503–523 (WWVARWGLWPLWALAALALAW) form a helical membrane-spanning segment.

This sequence belongs to the CN hydrolase family. Apolipoprotein N-acyltransferase subfamily.

Its subcellular location is the cell inner membrane. It carries out the reaction N-terminal S-1,2-diacyl-sn-glyceryl-L-cysteinyl-[lipoprotein] + a glycerophospholipid = N-acyl-S-1,2-diacyl-sn-glyceryl-L-cysteinyl-[lipoprotein] + a 2-acyl-sn-glycero-3-phospholipid + H(+). It functions in the pathway protein modification; lipoprotein biosynthesis (N-acyl transfer). In terms of biological role, catalyzes the phospholipid dependent N-acylation of the N-terminal cysteine of apolipoprotein, the last step in lipoprotein maturation. The chain is Apolipoprotein N-acyltransferase from Verminephrobacter eiseniae (strain EF01-2).